We begin with the raw amino-acid sequence, 450 residues long: Beclin-1 (450 aa).

Residue M1 is modified to N-acetylmethionine. Phosphoserine occurs at positions 15 and 30. A disordered region spans residues 48–72; it reads TTAQAKPGETQEEETNSGEEPFIET. A phosphoserine; by AMPK mark is found at S90, S93, and S96. The BH3 signature appears at 108-127; that stretch reads TMENLSRRLKVTGDLFDIMS. The tract at residues 112 to 159 is interaction with BCL2 and BCL2L1 isoform Bcl-X(L); that stretch reads LSRRLKVTGDLFDIMSGQTDVDHPLCEECTDTLLDQLDTQLNVTENEC. A Phosphothreonine; by DAPK1 modification is found at T119. The stretch at 142–270 forms a coiled coil; the sequence is DTLLDQLDTQ…LDKLKKTNVF (129 aa). The tract at residues 245–450 is evolutionary conserved domain (ECD); it reads DELKSVENQM…AWVSSQFYNK (206 aa). Glycyl lysine isopeptide (Lys-Gly) (interchain with G-Cter in ubiquitin) cross-links involve residues K402 and K437. Positions 425–450 are required for membrane-association; that stretch reads WTKALKFMLTNLKWGLAWVSSQFYNK.

This sequence belongs to the beclin family. As to quaternary structure, a homodimeric form is proposed to exist; this metastable form readily transits to ATG14- or UVRAG-containing complexes with BECN1:UVRAG being more stable than BECN1:ATG14. Component of the PI3K (PI3KC3/PI3K-III/class III phosphatidylinositol 3-kinase) complex the core of which is composed of the catalytic subunit PIK3C3, the regulatory subunit PIK3R4 and BECN1 associating with additional regulatory/auxiliary subunits to form alternative complex forms. Alternative complex forms containing a fourth regulatory subunit in a mutually exclusive manner are PI3K complex I (PI3KC3-C1) containing ATG14, and PI3K complex II (PI3KC3-C2) containing UVRAG. PI3KC3-C1 displays a V-shaped architecture with PIK3R4 serving as a bridge between PIK3C3 and the ATG14:BECN1 subcomplex. Both, PI3KC3-C1 and PI3KC3-C2, can associate with further regulatory subunits, such as RUBCN, SH3GLB1/Bif-1 and AMBRA1. PI3KC3-C1 probably associates with PIK3CB. Forms a complex with PPP2CA and AMBRA1; AMBRA1 and BECN1 components of the complex regulate MYC stability via different pathways. Component of the complex, at least composed of LRPPRC, BECN1 and BCL2; the interactions prevent BECN1 from forming an autophagy-inducing complex with PIK3C3. Interacts with AMBRA1, GOPC, GRID2. Interacts with BCL2 and BCL2L1 isoform Bcl-X(L); the interaction inhibits BECN1 function in promoting autophagy by interfering with the formation of the PI3K complex. Interacts with cytosolic HMGB1; inhibits the interaction of BECN1 and BCL2 leading to promotion of autophagy. Interacts with USP10, USP13, VMP1, DAPK1, RAB39A. Interacts with the poly-Gln domain of ATXN3; the interaction causes deubiquitination at Lys-402 and stabilizes BECN1. Interacts with SLAMF1. Interacts with TRIM5; the interaction causes activation of BECN1 by causing its dissociation from its inhibitors BCL2 and TAB2. Interacts with active ULK1 (phosphorylated on 'Ser-317') and MEFV simultaneously. Interacts with WDR81 and WDR91; negatively regulates the PI3 kinase/PI3K activity associated with endosomal membranes. Interacts with LAPTM4B; competes with EGFR for LAPTM4B binding; regulates EGFR activity. Interacts with TRIM50. Interacts with TRIM16. Interacts with ATG14; this interaction is increased in the absence of TMEM39A. Interacts with WASHC1; preventing interaction with AMBRA1 and the DCX(AMBRA1) complex and subsequent ubiquitination. Interacts with TRIM17. Interacts with BCL2L10/BCL-B (via BH1 domain). Interacts with SH3BGRL. Interacts with IRGM; enhancing BECN1-interacting partners and influencing the composition of the BECN1 complex. Interacts with ARMC3. Interacts with LRPPRC. In terms of assembly, (Microbial infection) Interacts with human cytomegalovirus/HHV-5 protein TRS1. (Microbial infection) Interacts with murine gammaherpesvirus 68 M11. As to quaternary structure, (Microbial infection) Interacts with herpes simplex virus 1 (HHV-1) protein ICP34.5; this interaction antagonizes the host autophagy response. In terms of assembly, (Microbial infection) Interacts with Epstein-Barr virus protein BHRF1; this interaction inhibits BECN1-mediated autophagy induction. Phosphorylation at Thr-119 by DAPK1 reduces its interaction with BCL2 and BCL2L1 and promotes induction of autophagy. In response to autophagic stimuli, phosphorylated at serine residues by AMPK in an ATG14-dependent manner, and this phosphorylation is critical for maximally efficient autophagy. In terms of processing, polyubiquitinated by NEDD4, both with 'Lys-11'- and 'Lys-63'-linkages. 'Lys-11'-linked polyubiquitination leads to degradation and is enhanced when the stabilizing interaction partner VPS34 is depleted. Deubiquitinated by USP10 and USP13, leading to stabilize the PIK3C3/VPS34-containing complexes. Polyubiquitinated at Lys-402 with 'Lys-48'-linkages. 'Lys-48'-linked polyubiquitination of Lys-402 leads to degradation. Deubiquitinated by ATXN3, leading to stabilization. Ubiquitinated at Lys-437 via 'Lys-63'-linkage by the DCX(AMBRA1) complex, thereby increasing the association between BECN1 and PIK3C3 to promote PIK3C3 activity. 'Lys-48'-linked ubiquitination by RNF216 leads to proteasomal degradation and autophagy inhibition. Post-translationally, proteolytically processed by caspases including CASP8 and CASP3; the C-terminal fragments lack autophagy-inducing capacity and are proposed to induce apoptosis. Thus the cleavage is proposed to be an determinant to switch from autophagy to apoptosis pathways affecting cellular homeostasis including viral infections and survival of tumor cells. In terms of tissue distribution, ubiquitous.

The protein localises to the cytoplasm. It is found in the golgi apparatus. Its subcellular location is the trans-Golgi network membrane. It localises to the endosome membrane. The protein resides in the endoplasmic reticulum membrane. The protein localises to the mitochondrion membrane. It is found in the endosome. Its subcellular location is the cytoplasmic vesicle. It localises to the autophagosome. The protein resides in the mitochondrion. The protein localises to the nucleus. Plays a central role in autophagy. Acts as a core subunit of the PI3K complex that mediates formation of phosphatidylinositol 3-phosphate; different complex forms are believed to play a role in multiple membrane trafficking pathways: PI3KC3-C1 is involved in initiation of autophagosomes and PI3KC3-C2 in maturation of autophagosomes and endocytosis. Involved in regulation of degradative endocytic trafficking and required for the abscission step in cytokinesis, probably in the context of PI3KC3-C2. Essential for the formation of PI3KC3-C2 but not PI3KC3-C1 PI3K complex forms. Involved in endocytosis. May play a role in antiviral host defense. Functionally, beclin-1-C 35 kDa localized to mitochondria can promote apoptosis; it induces the mitochondrial translocation of BAX and the release of proapoptotic factors. Its function is as follows. (Microbial infection) Protects against infection by a neurovirulent strain of Sindbis virus. This is Beclin-1 (BECN1) from Homo sapiens (Human).